Here is a 1434-residue protein sequence, read N- to C-terminus: DNA-directed RNA polymerase subunit beta (1434 aa).

The protein belongs to the RNA polymerase beta chain family. In terms of assembly, the RNAP catalytic core consists of 2 alpha, 1 beta, 1 beta' and 1 omega subunit. When a sigma factor is associated with the core the holoenzyme is formed, which can initiate transcription.

The catalysed reaction is RNA(n) + a ribonucleoside 5'-triphosphate = RNA(n+1) + diphosphate. Its function is as follows. DNA-dependent RNA polymerase catalyzes the transcription of DNA into RNA using the four ribonucleoside triphosphates as substrates. The chain is DNA-directed RNA polymerase subunit beta from Ureaplasma urealyticum serovar 10 (strain ATCC 33699 / Western).